Here is an 88-residue protein sequence, read N- to C-terminus: Putative membrane protein insertion efficiency factor (88 aa).

This sequence belongs to the UPF0161 family.

The protein localises to the cell inner membrane. In terms of biological role, could be involved in insertion of integral membrane proteins into the membrane. The polypeptide is Putative membrane protein insertion efficiency factor (Burkholderia vietnamiensis (strain G4 / LMG 22486) (Burkholderia cepacia (strain R1808))).